The primary structure comprises 156 residues: Nuclear cap-binding protein subunit 2 (156 aa).

Serine 2 carries the N-acetylserine modification. A phosphoserine mark is found at serine 13 and serine 18. MRNA-binding positions include tyrosine 20, tyrosine 43, 112-116 (RTDWD), 123-127 (RQYGR), and 133-134 (QV). Residues 40–118 (CTLYVGNLSF…RIIRTDWDAG (79 aa)) form the RRM domain. The interval 124 to 156 (QYGRGRSGGQVRDEYRQDYDAGRGGYGKLAQNQ) is disordered. Residues 134–144 (VRDEYRQDYDA) show a composition bias toward basic and acidic residues. Arginine 146 carries the post-translational modification Omega-N-methylarginine.

The protein belongs to the RRM NCBP2 family. In terms of assembly, component of the nuclear cap-binding complex (CBC), a heterodimer composed of NCBP1/CBP80 and NCBP2/CBP20 that interacts with m7GpppG-capped RNA. Found in a U snRNA export complex with PHAX/RNUXA, NCBP1/CBP80, NCBP2/CBP20, RAN, XPO1 and m7G-capped RNA. Interacts with PHAX/RNUXA, EIF4G1, HNRNPF, HNRNPH1 and ALYREF/THOC4/ALY. Interacts with SRRT/ARS2 and KPNA3.

It is found in the nucleus. Its subcellular location is the cytoplasm. In terms of biological role, component of the cap-binding complex (CBC), which binds co-transcriptionally to the 5' cap of pre-mRNAs and is involved in various processes such as pre-mRNA splicing, translation regulation, nonsense-mediated mRNA decay, RNA-mediated gene silencing (RNAi) by microRNAs (miRNAs) and mRNA export. The CBC complex is involved in mRNA export from the nucleus via its interaction with ALYREF/THOC4/ALY, leading to the recruitment of the mRNA export machinery to the 5' end of mRNA and to mRNA export in a 5' to 3' direction through the nuclear pore. The CBC complex is also involved in mediating U snRNA and intronless mRNAs export from the nucleus. The CBC complex is essential for a pioneer round of mRNA translation, before steady state translation when the CBC complex is replaced by cytoplasmic cap-binding protein eIF4E. The pioneer round of mRNA translation mediated by the CBC complex plays a central role in nonsense-mediated mRNA decay (NMD), NMD only taking place in mRNAs bound to the CBC complex, but not on eIF4E-bound mRNAs. The CBC complex enhances NMD in mRNAs containing at least one exon-junction complex (EJC) via its interaction with UPF1, promoting the interaction between UPF1 and UPF2. The CBC complex is also involved in 'failsafe' NMD, which is independent of the EJC complex, while it does not participate in Staufen-mediated mRNA decay (SMD). During cell proliferation, the CBC complex is also involved in microRNAs (miRNAs) biogenesis via its interaction with SRRT/ARS2, thereby being required for miRNA-mediated RNA interference. The CBC complex also acts as a negative regulator of PARN, thereby acting as an inhibitor of mRNA deadenylation. In the CBC complex, NCBP2/CBP20 recognizes and binds capped RNAs (m7GpppG-capped RNA) but requires NCBP1/CBP80 to stabilize the movement of its N-terminal loop and lock the CBC into a high affinity cap-binding state with the cap structure. The conventional cap-binding complex with NCBP2 binds both small nuclear RNA (snRNA) and messenger (mRNA) and is involved in their export from the nucleus. This chain is Nuclear cap-binding protein subunit 2 (NCBP2), found in Bos taurus (Bovine).